A 169-amino-acid chain; its full sequence is MELNPGAPAVVADSANGARKWSGKVHALLPNTKPEQAWTLLKDFINLHKVMPSLSVCELVEGEANVVGCVRYVKGIMHPIEEEFWAKEKLVALDNKNMSYSYIFTECFTGYEDYTATMQIVEGPEHKGSRFDWSFQCKYIEGMTESAFTEILQHWATEIGQKIEEVCSA.

Positions 1 to 12 (MELNPGAPAVVA) are excised as a propeptide. Active-site proton donor/acceptor residues include glutamate 88 and tyrosine 102.

The protein localises to the vacuole. The enzyme catalyses (E)-prop-1-en-1-SO-peroxol = (Z)-propanethial S-oxide. It catalyses the reaction (E)-alk-1-en-1-SO-peroxol = (Z)-alkanethial oxide. Functionally, produces lacrymatory factor (propanthial S-oxide) from 1-propenylsulphenic acid, an unstable compound resulting from the degradation of trans-1-propenyl-L-cysteine sulphoxide (PRENCSO) by alliinase. The polypeptide is Lachrymatory-factor synthase (Allium cepa (Onion)).